Reading from the N-terminus, the 369-residue chain is Phosphatidylglycerol--prolipoprotein diacylglyceryl transferase (369 aa).

3 helical membrane-spanning segments follow: residues 26–46 (YYGILYATGILVAIIAGILTL), 60–80 (YVFIGIISIIFGARTWSFIIG), and 97–117 (LAIQGGVIFTITTGLIFFFFI). Arg-167 serves as a coordination point for a 1,2-diacyl-sn-glycero-3-phospho-(1'-sn-glycerol). The next 2 membrane-spanning stretches (helical) occupy residues 216–236 (VPIFLIESFFNVIAFIIIVFL) and 273–293 (FVTSIVTSVLFLLGGSIGFIF).

This sequence belongs to the Lgt family.

It localises to the cell membrane. The enzyme catalyses L-cysteinyl-[prolipoprotein] + a 1,2-diacyl-sn-glycero-3-phospho-(1'-sn-glycerol) = an S-1,2-diacyl-sn-glyceryl-L-cysteinyl-[prolipoprotein] + sn-glycerol 1-phosphate + H(+). It participates in protein modification; lipoprotein biosynthesis (diacylglyceryl transfer). In terms of biological role, catalyzes the transfer of the diacylglyceryl group from phosphatidylglycerol to the sulfhydryl group of the N-terminal cysteine of a prolipoprotein, the first step in the formation of mature lipoproteins. The polypeptide is Phosphatidylglycerol--prolipoprotein diacylglyceryl transferase (Mycoplasmoides gallisepticum (strain R(low / passage 15 / clone 2)) (Mycoplasma gallisepticum)).